The primary structure comprises 173 residues: Large ribosomal subunit protein uL10 (173 aa).

It belongs to the universal ribosomal protein uL10 family. In terms of assembly, part of the ribosomal stalk of the 50S ribosomal subunit. The N-terminus interacts with L11 and the large rRNA to form the base of the stalk. The C-terminus forms an elongated spine to which L12 dimers bind in a sequential fashion forming a multimeric L10(L12)X complex.

Functionally, forms part of the ribosomal stalk, playing a central role in the interaction of the ribosome with GTP-bound translation factors. The polypeptide is Large ribosomal subunit protein uL10 (Thiobacillus denitrificans (strain ATCC 25259 / T1)).